A 600-amino-acid chain; its full sequence is NADH-quinone oxidoreductase subunit C/D (600 aa).

Residues 1–190 form an NADH dehydrogenase I subunit C region; it reads MVNNMTDLTA…SPFELTKAKQ (190 aa). Residues 214-600 are NADH dehydrogenase I subunit D; that stretch reads DFMFLNLGPN…IDFVMSDVDR (387 aa).

The protein in the N-terminal section; belongs to the complex I 30 kDa subunit family. It in the C-terminal section; belongs to the complex I 49 kDa subunit family. In terms of assembly, NDH-1 is composed of 13 different subunits. Subunits NuoB, CD, E, F, and G constitute the peripheral sector of the complex.

Its subcellular location is the cell inner membrane. It carries out the reaction a quinone + NADH + 5 H(+)(in) = a quinol + NAD(+) + 4 H(+)(out). Its function is as follows. NDH-1 shuttles electrons from NADH, via FMN and iron-sulfur (Fe-S) centers, to quinones in the respiratory chain. The immediate electron acceptor for the enzyme in this species is believed to be ubiquinone. Couples the redox reaction to proton translocation (for every two electrons transferred, four hydrogen ions are translocated across the cytoplasmic membrane), and thus conserves the redox energy in a proton gradient. The chain is NADH-quinone oxidoreductase subunit C/D from Escherichia coli (strain K12 / DH10B).